Consider the following 786-residue polypeptide: Pentatricopeptide repeat-containing protein 10, chloroplastic (786 aa).

Positions methionine 1–phenylalanine 71 are disordered. The N-terminal 95 residues, methionine 1 to leucine 95, are a transit peptide targeting the chloroplast. The segment covering proline 27–serine 36 has biased composition (pro residues). The segment covering serine 37 to proline 50 has biased composition (low complexity). PPR repeat units follow at residues aspartate 137 to proline 167, aspartate 173 to proline 207, threonine 208 to proline 243, aspartate 244 to proline 278, cysteine 279 to proline 313, aspartate 314 to proline 348, asparagine 349 to proline 383, asparagine 384 to proline 418, asparagine 419 to leucine 453, serine 454 to proline 488, cysteine 489 to proline 523, asparagine 524 to phenylalanine 558, serine 560 to proline 594, aspartate 595 to proline 629, aspartate 630 to lysine 664, aspartate 666 to proline 700, cysteine 701 to proline 735, and methionine 736 to phenylalanine 770.

It belongs to the PPR family. P subfamily. Forms homodimers.

It is found in the plastid. The protein resides in the chloroplast stroma. Involved in chloroplast mRNA stability. Binds specifically to two intergenic RNA regions of similar sequence located in the chloroplast atpH 5'-UTR and psaJ 3'-UTR, and serves as a barrier to RNA decay. Binding to a specific site in the intergenic region of the chloroplast atpH is sufficient to block 5'-3' and 3'-5' exonucleases. Acts as a protein barrier to block mRNA degradation by exonucleases, and defines processed mRNA termini in chloroplasts. Remodels the structure of the atpH ribosome-binding site in a manner that can account for its ability to enhance translation. Stabilizes a RNA 3'-end downstream from psaI. Binds atpH RNA as a monomer. The chain is Pentatricopeptide repeat-containing protein 10, chloroplastic from Zea mays (Maize).